Here is a 430-residue protein sequence, read N- to C-terminus: Enolase (430 aa).

Glutamine 165 provides a ligand contact to (2R)-2-phosphoglycerate. The Proton donor role is filled by glutamate 207. Residues aspartate 244, glutamate 287, and aspartate 314 each coordinate Mg(2+). Residues lysine 339, arginine 368, serine 369, and lysine 390 each contribute to the (2R)-2-phosphoglycerate site. The Proton acceptor role is filled by lysine 339.

It belongs to the enolase family. Component of the RNA degradosome, a multiprotein complex involved in RNA processing and mRNA degradation. Mg(2+) is required as a cofactor.

The protein resides in the cytoplasm. Its subcellular location is the secreted. It localises to the cell surface. It catalyses the reaction (2R)-2-phosphoglycerate = phosphoenolpyruvate + H2O. It participates in carbohydrate degradation; glycolysis; pyruvate from D-glyceraldehyde 3-phosphate: step 4/5. In terms of biological role, catalyzes the reversible conversion of 2-phosphoglycerate (2-PG) into phosphoenolpyruvate (PEP). It is essential for the degradation of carbohydrates via glycolysis. In Xanthomonas oryzae pv. oryzae (strain MAFF 311018), this protein is Enolase.